The primary structure comprises 305 residues: MANSKTAAEAAIHGQIEKTTAWKDFLALIKMGIVNSNFITTFTGMWLAFYFTGMSFLGNLDIVLLTMIGSSLIIAGSCAINNAFDRDIDILMERTKTRPTVTGKIQPGQAYAFGILLVVLGLIMLLMTTVTSAVIGFIGVFTYAVLYTMWSKRHYTINTVIGSVSGAVPPLIGWTAVTGTIDTTAWVLFMIMFIWQIPHFLSLAIKKTEDYRKAGIPMLPVVYGFEVTKRQIIIWTACLLPLPFFLGGLGWPIVALGTLLNIGWLVIGLMGFKMKDVMKWSTLMFVYSLNYLTIFFVAMIIITLF.

9 helical membrane-spanning segments follow: residues 38–58 (FITTFTGMWLAFYFTGMSFLG), 60–80 (LDIVLLTMIGSSLIIAGSCAI), 110–130 (AYAFGILLVVLGLIMLLMTTV), 131–151 (TSAVIGFIGVFTYAVLYTMWS), 161–181 (IGSVSGAVPPLIGWTAVTGTI), 185–205 (AWVLFMIMFIWQIPHFLSLAI), 227–247 (VTKRQIIIWTACLLPLPFFLG), 249–269 (LGWPIVALGTLLNIGWLVIGL), and 285–305 (FVYSLNYLTIFFVAMIIITLF).

The protein belongs to the UbiA prenyltransferase family. Protoheme IX farnesyltransferase subfamily. Interacts with CtaA.

Its subcellular location is the cell membrane. The catalysed reaction is heme b + (2E,6E)-farnesyl diphosphate + H2O = Fe(II)-heme o + diphosphate. Its pathway is porphyrin-containing compound metabolism; heme O biosynthesis; heme O from protoheme: step 1/1. Converts heme B (protoheme IX) to heme O by substitution of the vinyl group on carbon 2 of heme B porphyrin ring with a hydroxyethyl farnesyl side group. The protein is Protoheme IX farnesyltransferase of Bacillus pumilus (strain SAFR-032).